Here is a 511-residue protein sequence, read N- to C-terminus: Glutamate/gamma-aminobutyrate antiporter (511 aa).

Residues 1-13 (MATSVQTGKAKQL) are Cytoplasmic-facing. A helical membrane pass occupies residues 14-36 (TLLGFFAITASMVMAVYEYPTFA). The Periplasmic portion of the chain corresponds to 37 to 40 (TSGF). Residues 41-64 (SLVFFLLLGGILWFIPVGLCAAEM) form a helical membrane-spanning segment. Residues 65–85 (ATVDGWEEGGVFAWVSNTLGP) lie on the Cytoplasmic side of the membrane. The helical transmembrane segment at 86 to 112 (RWGFAAISFGYLQIAIGFIPMLYFVLG) threads the bilayer. The Periplasmic segment spans residues 113–126 (ALSYILKWPALNED). A helical transmembrane segment spans residues 127–147 (PITKTIAALIILWALALTQFG). At 148–151 (GTKY) the chain is on the cytoplasmic side. The chain crosses the membrane as a helical span at residues 152-180 (TARIAKVGFFAGILLPAFILIALAAIYLH). Residues 181–201 (SGAPVAIEMDSKTFFPDFSKV) are Periplasmic-facing. Residues 202–225 (GTLVVFVAFILSYMGVEASATHVN) traverse the membrane as a helical segment. Residues 226 to 229 (EMSN) lie on the Cytoplasmic side of the membrane. A helical membrane pass occupies residues 230–259 (PGRDYPLAMLLLMVAAICLSSVGGLSIAMV). Residues 260-288 (IPGNEINLSAGVMQTFTVLMSHVAPEIEW) are Periplasmic-facing. Residues 289–322 (TVRVISALLLLGVLAEIASWIVGPSRGMYVTAQK) form a helical membrane-spanning segment. The Cytoplasmic portion of the chain corresponds to 323–337 (NLLPAAFAKMNKNGV). The helical transmembrane segment at 338 to 359 (PVTLVISQLVITSIALIILTNT) threads the bilayer. Residues 360–362 (GGG) are Periplasmic-facing. The helical transmembrane segment at 363 to 396 (NNMSFLIALALTVVIYLCAYFMLFIGYIVLVLKH) threads the bilayer. Topologically, residues 397–409 (PDLKRTFNIPGGK) are cytoplasmic. Residues 410-430 (GVKLVVAIVGLLTSIMAFIVS) traverse the membrane as a helical segment. At 431–443 (FLPPDNIQGDSTD) the chain is on the periplasmic side. Residues 444 to 467 (MYVELLVVSFLVVLALPFILYAVH) traverse the membrane as a helical segment. At 468 to 511 (DRKGKANTGVTLEPINSQNAPKGHFFLHPRARSPHYIVMNDKKH) the chain is on the cytoplasmic side.

It belongs to the amino acid-polyamine-organocation (APC) superfamily. Glutamate:GABA antiporter (GGA) (TC 2.A.3.7) family. In terms of assembly, monomer.

Its subcellular location is the cell inner membrane. The catalysed reaction is 4-aminobutanoate(in) + L-glutamate(out) = 4-aminobutanoate(out) + L-glutamate(in). With respect to regulation, shows pH-dependent activity. The Glu/GABA transport activity is robust at pH 4.5 and rapidly decreases with increasing pH, with no detectable activity at pH 6.5 or above. The Glu analog L-trans-pyrrolidine-2,4-dicarboxylic acid (L-PDC) blocks the uptake of glutamate by selective inhibition. Involved in glutaminase-dependent acid resistance. Exchanges extracellular glutamate (Glu) for intracellular gamma-aminobutyric acid (GABA) under acidic conditions. The protonation states of substrates are crucial for transport. Selectively transports Glu with no net charge and GABA with a positive charge. Also efficiently transports glutamine and, to a smaller extent, methionine and leucine. When the extracellular pH drops below 2.5, can import L-glutamine and export either glutamate or GABA. The ability to survive the extremely acidic conditions of the stomach is essential for successful colonization of the host by commensal and pathogenic bacteria. This Escherichia coli (strain K12) protein is Glutamate/gamma-aminobutyrate antiporter.